A 123-amino-acid chain; its full sequence is Fluoride-specific ion channel FluC (123 aa).

The next 4 membrane-spanning stretches (helical) occupy residues 1–21, 32–52, 66–86, and 99–119; these read MQWL…GWLA, LGTL…LVWF, FVIT…VEVF, and GLIG…FYFF. Na(+)-binding residues include G73 and T76.

Belongs to the fluoride channel Fluc/FEX (TC 1.A.43) family.

It localises to the cell inner membrane. The catalysed reaction is fluoride(in) = fluoride(out). Its activity is regulated as follows. Na(+) is not transported, but it plays an essential structural role and its presence is essential for fluoride channel function. Functionally, fluoride-specific ion channel. Important for reducing fluoride concentration in the cell, thus reducing its toxicity. The chain is Fluoride-specific ion channel FluC from Psychrobacter cryohalolentis (strain ATCC BAA-1226 / DSM 17306 / VKM B-2378 / K5).